A 396-amino-acid polypeptide reads, in one-letter code: S-adenosylmethionine synthase 4 (396 aa).

Glu-12 serves as a coordination point for Mg(2+). An ATP-binding site is contributed by His-18. Glu-46 provides a ligand contact to K(+). Positions 59 and 102 each coordinate L-methionine. Residues 170–172 (DGK), 238–241 (SGRF), Asp-249, 255–256 (RK), Ala-272, Lys-276, and Lys-280 each bind ATP. Asp-249 lines the L-methionine pocket. Residue Lys-280 participates in L-methionine binding.

Belongs to the AdoMet synthase family. As to quaternary structure, homotetramer. It depends on Mn(2+) as a cofactor. Mg(2+) is required as a cofactor. The cofactor is Co(2+). Requires K(+) as cofactor.

The protein localises to the cytoplasm. The enzyme catalyses L-methionine + ATP + H2O = S-adenosyl-L-methionine + phosphate + diphosphate. Its pathway is amino-acid biosynthesis; S-adenosyl-L-methionine biosynthesis; S-adenosyl-L-methionine from L-methionine: step 1/1. Catalyzes the formation of S-adenosylmethionine from methionine and ATP. The reaction comprises two steps that are both catalyzed by the same enzyme: formation of S-adenosylmethionine (AdoMet) and triphosphate, and subsequent hydrolysis of the triphosphate. The protein is S-adenosylmethionine synthase 4 (SAM4) of Hordeum vulgare (Barley).